We begin with the raw amino-acid sequence, 235 residues long: LexA repressor (235 aa).

The segment at residues 26-46 is a DNA-binding region (H-T-H motif); sequence FDEMKEALDLASKSGIHRLIT. Residues 72 to 104 form a disordered region; that stretch reads QATTAAPPKGRGAFRPQVLEGGGQAPTTSAQPQ. Catalysis depends on for autocatalytic cleavage activity residues serine 156 and lysine 193.

The protein belongs to the peptidase S24 family. As to quaternary structure, homodimer.

The catalysed reaction is Hydrolysis of Ala-|-Gly bond in repressor LexA.. Its function is as follows. Represses a number of genes involved in the response to DNA damage (SOS response), including recA and lexA. In the presence of single-stranded DNA, RecA interacts with LexA causing an autocatalytic cleavage which disrupts the DNA-binding part of LexA, leading to derepression of the SOS regulon and eventually DNA repair. In Caulobacter sp. (strain K31), this protein is LexA repressor.